We begin with the raw amino-acid sequence, 630 residues long: Arginine--tRNA ligase (630 aa).

The 'HIGH' region signature appears at 120 to 130; that stretch reads ANPVHPLHIGH.

It belongs to the class-I aminoacyl-tRNA synthetase family.

The protein resides in the cytoplasm. It catalyses the reaction tRNA(Arg) + L-arginine + ATP = L-arginyl-tRNA(Arg) + AMP + diphosphate. The polypeptide is Arginine--tRNA ligase (Pyrobaculum aerophilum (strain ATCC 51768 / DSM 7523 / JCM 9630 / CIP 104966 / NBRC 100827 / IM2)).